Consider the following 199-residue polypeptide: MRIYQCHFCSSPCYPGHGIMFVRNDAKEFRFCRSKCHKAFKQRRNPRKLKWTKAFRKAAGKELAVDSTLTFAQRRNVPVRYNRELVATTLKAMARIEEIRQKRERAFYKNRMRGNKEKDFLRDKKLVESNPELLRIREVEIARKLAKEQERAESVSEQEESEEEEEDMEIDSDEEEEEQLEKQKILLKNRRRNTKKIAF.

The interval 147 to 182 (KEQERAESVSEQEESEEEEEDMEIDSDEEEEEQLEK) is disordered. Residues 156–179 (SEQEESEEEEEDMEIDSDEEEEEQ) show a composition bias toward acidic residues. Serine 172 is modified (phosphoserine).

Belongs to the eukaryotic ribosomal protein eL24 family. As to quaternary structure, associated with nucleolar and cytoplasmic pre-60S particles. At the end of biogenesis it dissociates from cytoplasmic pre-60S particles and is likely to be exchanged for its ribosomal homolog, RPL24. Interacts (via C-terminus) with AFG2 (hexameric form); the interaction is direct, recruits AFG2 to pre-60S ribosomal particles and promotes AFG2 ATPase activity and RLP24 release from pre-60S ribosomal particles. Interacts with NOG1; the interaction is direct.

The protein localises to the cytoplasm. It is found in the nucleus. Functionally, involved in the biogenesis of the 60S ribosomal subunit. Ensures the docking of NOG1 to pre-60S ribosomal particles. Activates and recruits ATPase AFG2 to cytoplasmic pre-60S ribosomal particles. This chain is Ribosome biogenesis protein RLP24 (RLP24), found in Saccharomyces cerevisiae (strain ATCC 204508 / S288c) (Baker's yeast).